We begin with the raw amino-acid sequence, 465 residues long: Lysosomal dipeptide transporter MFSD1 (465 aa).

Residues 1-23 are disordered; it reads MEEEDEEARALLAGGPDEADRGA. A Dileucine internalization motif motif is present at residues 11 to 12; it reads LL. 12 helical membrane passes run 39 to 59, 83 to 103, 113 to 133, 135 to 155, 170 to 191, 213 to 233, 266 to 286, 304 to 324, 331 to 351, 361 to 381, 392 to 412, and 418 to 438; these read LVHR…SYFC, LLYA…GFLI, TIIF…GGIF, AFWL…SLAV, LNLV…NMNL, ITLM…LALA, LWLI…FIGL, AINS…GLLV, IIWV…LAFT, LLGL…AFVV, FMQS…GMIL, and LFLE…VVLL.

It belongs to the major facilitator superfamily. Homodimer. Interacts with lysosomal protein GLMP (via lumenal domain); the interaction starts while both proteins are still in the endoplasmic reticulum and is required for stabilization of MFSD1 in lysosomes but has no direct effect on its targeting to lysosomes or transporter activity.

The protein resides in the lysosome membrane. It catalyses the reaction L-alpha-aminoacyl-L-arginine(out) = L-alpha-aminoacyl-L-arginine(in). The catalysed reaction is L-arginyl-L-alpha-amino acid(out) = L-arginyl-L-alpha-amino acid(in). The enzyme catalyses L-arginyl-glycine(out) = L-arginyl-glycine(in). It carries out the reaction L-alpha-aminoacyl-L-lysine(out) = L-alpha-aminoacyl-L-lysine(in). It catalyses the reaction L-aspartyl-L-lysine(out) = L-aspartyl-L-lysine(in). The catalysed reaction is L-alanyl-L-lysine(out) = L-alanyl-L-lysine(in). The enzyme catalyses L-lysyl-L-alpha-amino acid(out) = L-lysyl-L-alpha-amino acid(in). It carries out the reaction L-lysyl-L-alanine(out) = L-lysyl-L-alanine(in). It catalyses the reaction L-lysyl-L-lysine(out) = L-lysyl-L-lysine(in). The catalysed reaction is L-lysyl-glycine(out) = L-lysyl-glycine(in). The enzyme catalyses L-alpha-aminoacyl-L-histidine(out) = L-alpha-aminoacyl-L-histidine(in). It carries out the reaction L-histidyl-L-alpha-amino acid(out) = L-histidyl-L-alpha-amino acid(in). It catalyses the reaction L-histidyl-glycine(out) = L-histidyl-glycine(in). In terms of biological role, lysosomal dipeptide uniporter that selectively exports lysine, arginine or histidine-containing dipeptides with a net positive charge from the lysosome lumen into the cytosol. Could play a role in a specific type of protein O-glycosylation indirectly regulating macrophages migration and tissue invasion. Also essential for liver homeostasis. This Pongo abelii (Sumatran orangutan) protein is Lysosomal dipeptide transporter MFSD1.